A 200-amino-acid polypeptide reads, in one-letter code: Putative HMP/thiamine-binding protein YkoF (200 aa).

Residues Leu-17 and Thr-49 each coordinate thiamine.

As to quaternary structure, homodimer in vitro. In vivo, may be a part of an ABC transporter complex which is composed of two ATP-binding proteins (YkoD), two transmembrane proteins (YkoC and YkoE) and a solute-binding protein (YkoF).

In terms of biological role, part of the ABC transporter complex YkoCDEF that could transport hydroxymethylpyrimidine (HMP) and/or thiamine. Could also transport other HMP-containing products. Binds thiamine via its HMP moiety. This Bacillus subtilis (strain 168) protein is Putative HMP/thiamine-binding protein YkoF (ykoF).